Consider the following 495-residue polypeptide: Neuronal acetylcholine receptor subunit alpha-3 (495 aa).

The signal sequence occupies residues 1 to 21 (MARRSRLRRLLLLLLLPVAST). Residues 22–240 (SDAEHRLFER…PLFYTINLII (219 aa)) are Extracellular-facing. Residues Asn-45 and Asn-162 are each glycosylated (N-linked (GlcNAc...) asparagine). Cystine bridges form between Cys-149–Cys-163 and Cys-213–Cys-214. Residues 241–256 (PCLLISFLTVLVFYLP) traverse the membrane as a helical segment. At 257–258 (SD) the chain is on the cytoplasmic side. A helical membrane pass occupies residues 259–275 (CGEKVTLCISVLLSLTV). A Na(+)-binding site is contributed by Glu-261. At 276–297 (FLLVITETIPSTSLVIPLIGEY) the chain is on the extracellular side. A helical membrane pass occupies residues 298 to 316 (LLFTMIFVTLSIVITVFVL). Residues 317 to 464 (NVHYRTPTTH…QDDWKYVAMV (148 aa)) lie on the Cytoplasmic side of the membrane. Phosphoserine is present on residues Ser-403 and Ser-406. The helical transmembrane segment at 465 to 483 (IDRIFLWVFILVCILGTAG) threads the bilayer. Residues 484–495 (LFLQPLMTRDDA) lie on the Extracellular side of the membrane.

It belongs to the ligand-gated ion channel (TC 1.A.9) family. Acetylcholine receptor (TC 1.A.9.1) subfamily. Alpha-3/CHRNA3 sub-subfamily. Neuronal AChR is composed of two different types of subunits: alpha and beta. CHRNA3/Alpha-3 subunit can be combined to CHRNB2/beta-2 or CHRNB4/beta-4 to give rise to functional receptors. Part of a complex composed of STUB1/CHIP, VCP/p97, CHRNA3, and UBXN2A that modulates the ubiquitination and endoplasmic reticulum-associated degradation (ERAD) of CHRNA3. Within the complex UBXN2A acts as a scaffold protein required for the interaction of CHRNA3 with VCP/p97, this interaction also inhibits CHRNA3 ubiquitination by STUB1/CHIP and subsequently ERAD. Interacts with UBXN2A (via SEP domain), the interaction is required for the interaction of CHRNA3 in the STUB1:VCP:UBXN2A complex. Interacts with RIC3; which is required for proper folding and assembly. Interacts with LYPD6. Ubiquitinated; by STUB1/CHIP and thereafter degraded by the 26S proteosome complex.

It is found in the synaptic cell membrane. Its subcellular location is the cell membrane. The protein resides in the endoplasmic reticulum. It localises to the golgi apparatus. The enzyme catalyses K(+)(in) = K(+)(out). It catalyses the reaction Na(+)(in) = Na(+)(out). The catalysed reaction is Ca(2+)(in) = Ca(2+)(out). Its activity is regulated as follows. Activated by a myriad of ligands such as acetylcholine, cytisine, nicotine, choline and epibatidine. The heteropentamer CHRNA3:CHRNB2 activity is blocked by alpha-conotoxins ImI, ImII, PnIA, GID and MII. The heteropentamer CHRNA3:CHRNB4 activity is blocked by the alpha-conotoxin ImI and AuIB. Its function is as follows. Component of neuronal acetylcholine receptors (nAChRs) that function as pentameric, ligand-gated cation channels with high calcium permeability among other activities. nAChRs are excitatory neurotrasnmitter receptors formed by a collection of nAChR subunits known to mediate synaptic transmission in the nervous system and the neuromuscular junction. Each nAchR subunit confers differential attributes to channel properties, including activation, deactivation and desensitization kinetics, pH sensitivity, cation permeability, and binding to allosteric modulators. CHRNA3 forms heteropentameric neuronal acetylcholine receptors with CHRNB2 and CHRNB4. CHRNA3:CHRNB4 being predominant in neurons of the autonomic ganglia, it is known as ganglionic nicotinic receptor. CHRNA3:CHRNB4 also plays an important role in the habenulo-interpeduncular tract, modulating the mesolimbic dopamine system and affecting reward circuits and addiction. Hypothalamic CHRNA3:CHRNB4 nAChR activation by nicotine leads to activation of POMC neurons and a decrease in food intake. Also expressed in the urothelium where it modulates reflex bladder activity by increasing intracellular calcium through extracellular influx and basal ATP release. The chain is Neuronal acetylcholine receptor subunit alpha-3 (CHRNA3) from Bos taurus (Bovine).